Here is a 58-residue protein sequence, read N- to C-terminus: Metallothionein-2B (58 aa).

The beta stretch occupies residues 1–29 (MPDPCCNDKCECKEGECKTGCKCKSCRCP). Positions 5, 6, 10, 12, 17, 21, 23, 26, 28, 31, 34, 38, 40, 46, 50, 54, 56, and 57 each coordinate a divalent metal cation. Residues 30–58 (PCDKCSSECKCTSKEECSKTCSKPCSCCP) are alpha.

The protein belongs to the metallothionein superfamily. Type 3 family.

In terms of biological role, binds six divalent metal ions. Known to bind copper and cadmium. The polypeptide is Metallothionein-2B (Callinectes sapidus (Blue crab)).